Consider the following 110-residue polypeptide: Protein RnfH (110 aa).

The disordered stretch occupies residues 90–110 (VDKTRREGSIEGRKWLPKDSR).

The protein belongs to the UPF0125 (RnfH) family.

This is Protein RnfH from Burkholderia mallei (strain NCTC 10229).